A 149-amino-acid chain; its full sequence is MHCPFCSAVDTKVIDSRLVAEGHQVRRRRECLLCHERFTTFEMAELVMPRVIKSNGSREPFNEEKLRGGILRALEKRPVSMEAIEKGVNHIKSCLRATGEREVASQLVGNLVMDELKSLDKVAYIRFASVYRSFEDIREFGEEIAKLEK.

The segment at 3-34 is a zinc-finger region; it reads CPFCSAVDTKVIDSRLVAEGHQVRRRRECLLC. One can recognise an ATP-cone domain in the interval 49-139; it reads PRVIKSNGSR…VYRSFEDIRE (91 aa).

This sequence belongs to the NrdR family. The cofactor is Zn(2+).

Functionally, negatively regulates transcription of bacterial ribonucleotide reductase nrd genes and operons by binding to NrdR-boxes. This is Transcriptional repressor NrdR from Aeromonas salmonicida (strain A449).